A 610-amino-acid chain; its full sequence is ESX-5 secretion system protein EccA5 (610 aa).

357–364 (GPPGTGKT) serves as a coordination point for ATP.

Belongs to the CbxX/CfxQ family. In terms of assembly, part of the ESX-5 / type VII secretion system (T7SS), which is composed of cytosolic and membrane components.

Its subcellular location is the cytoplasm. Functionally, part of an ESX-5 / type VII specialized secretion system (T7SS), which exports several proteins. EccA5 exhibits ATPase activity and may provide energy for the export of ESX-5 substrates. The chain is ESX-5 secretion system protein EccA5 from Mycobacterium bovis (strain ATCC BAA-935 / AF2122/97).